Here is a 334-residue protein sequence, read N- to C-terminus: S-adenosylmethionine:tRNA ribosyltransferase-isomerase (334 aa).

It belongs to the QueA family. Monomer.

Its subcellular location is the cytoplasm. The catalysed reaction is 7-aminomethyl-7-carbaguanosine(34) in tRNA + S-adenosyl-L-methionine = epoxyqueuosine(34) in tRNA + adenine + L-methionine + 2 H(+). It functions in the pathway tRNA modification; tRNA-queuosine biosynthesis. In terms of biological role, transfers and isomerizes the ribose moiety from AdoMet to the 7-aminomethyl group of 7-deazaguanine (preQ1-tRNA) to give epoxyqueuosine (oQ-tRNA). In Aquifex aeolicus (strain VF5), this protein is S-adenosylmethionine:tRNA ribosyltransferase-isomerase.